Here is a 284-residue protein sequence, read N- to C-terminus: 2-dehydro-3-deoxyphosphooctonate aldolase (284 aa).

This sequence belongs to the KdsA family.

Its subcellular location is the cytoplasm. The catalysed reaction is D-arabinose 5-phosphate + phosphoenolpyruvate + H2O = 3-deoxy-alpha-D-manno-2-octulosonate-8-phosphate + phosphate. The protein operates within carbohydrate biosynthesis; 3-deoxy-D-manno-octulosonate biosynthesis; 3-deoxy-D-manno-octulosonate from D-ribulose 5-phosphate: step 2/3. It participates in bacterial outer membrane biogenesis; lipopolysaccharide biosynthesis. In Escherichia coli O6:H1 (strain CFT073 / ATCC 700928 / UPEC), this protein is 2-dehydro-3-deoxyphosphooctonate aldolase.